Consider the following 59-residue polypeptide: Large ribosomal subunit protein bL32 (59 aa).

The interval 1–59 (MAVQQNKKSPSKRGMHRSHDFLTTAPIAVEPTTGEVHLRHHVSPNGYYRGRKVVKTKND) is disordered. The span at 49–59 (RGRKVVKTKND) shows a compositional bias: basic residues.

Belongs to the bacterial ribosomal protein bL32 family.

The chain is Large ribosomal subunit protein bL32 from Ralstonia pickettii (strain 12J).